The primary structure comprises 292 residues: 4-hydroxy-tetrahydrodipicolinate synthase (292 aa).

Position 45 (Thr-45) interacts with pyruvate. Tyr-133 (proton donor/acceptor) is an active-site residue. Catalysis depends on Lys-161, which acts as the Schiff-base intermediate with substrate. Residue Ile-203 participates in pyruvate binding.

Belongs to the DapA family. Homotetramer; dimer of dimers.

It localises to the cytoplasm. The enzyme catalyses L-aspartate 4-semialdehyde + pyruvate = (2S,4S)-4-hydroxy-2,3,4,5-tetrahydrodipicolinate + H2O + H(+). It participates in amino-acid biosynthesis; L-lysine biosynthesis via DAP pathway; (S)-tetrahydrodipicolinate from L-aspartate: step 3/4. Functionally, catalyzes the condensation of (S)-aspartate-beta-semialdehyde [(S)-ASA] and pyruvate to 4-hydroxy-tetrahydrodipicolinate (HTPA). The sequence is that of 4-hydroxy-tetrahydrodipicolinate synthase from Dechloromonas aromatica (strain RCB).